The sequence spans 156 residues: MNLNATLIGQLIAFALFTWFCVKFVWPPIIKAIEERQSSIANALASAEAARKEQADTKTLAEEEITKAKIQAQEIIDSANKRRNEVLDEVKAEAETLKAKIIEQGYAEVEAERKRVQEELRVKVASLAIAGAEKIVGRTVDEAANNDIIDKLVAEL.

A helical membrane pass occupies residues 7 to 29; sequence LIGQLIAFALFTWFCVKFVWPPI.

This sequence belongs to the ATPase B chain family. As to quaternary structure, F-type ATPases have 2 components, F(1) - the catalytic core - and F(0) - the membrane proton channel. F(1) has five subunits: alpha(3), beta(3), gamma(1), delta(1), epsilon(1). F(0) has three main subunits: a(1), b(2) and c(10-14). The alpha and beta chains form an alternating ring which encloses part of the gamma chain. F(1) is attached to F(0) by a central stalk formed by the gamma and epsilon chains, while a peripheral stalk is formed by the delta and b chains.

The protein resides in the cell inner membrane. F(1)F(0) ATP synthase produces ATP from ADP in the presence of a proton or sodium gradient. F-type ATPases consist of two structural domains, F(1) containing the extramembraneous catalytic core and F(0) containing the membrane proton channel, linked together by a central stalk and a peripheral stalk. During catalysis, ATP synthesis in the catalytic domain of F(1) is coupled via a rotary mechanism of the central stalk subunits to proton translocation. Its function is as follows. Component of the F(0) channel, it forms part of the peripheral stalk, linking F(1) to F(0). This chain is ATP synthase subunit b, found in Actinobacillus succinogenes (strain ATCC 55618 / DSM 22257 / CCUG 43843 / 130Z).